A 283-amino-acid polypeptide reads, in one-letter code: ATP phosphoribosyltransferase (283 aa).

It belongs to the ATP phosphoribosyltransferase family. Long subfamily. It depends on Mg(2+) as a cofactor.

Its subcellular location is the cytoplasm. The enzyme catalyses 1-(5-phospho-beta-D-ribosyl)-ATP + diphosphate = 5-phospho-alpha-D-ribose 1-diphosphate + ATP. It participates in amino-acid biosynthesis; L-histidine biosynthesis; L-histidine from 5-phospho-alpha-D-ribose 1-diphosphate: step 1/9. With respect to regulation, feedback inhibited by histidine. Functionally, catalyzes the condensation of ATP and 5-phosphoribose 1-diphosphate to form N'-(5'-phosphoribosyl)-ATP (PR-ATP). Has a crucial role in the pathway because the rate of histidine biosynthesis seems to be controlled primarily by regulation of HisG enzymatic activity. In Bifidobacterium longum (strain DJO10A), this protein is ATP phosphoribosyltransferase.